We begin with the raw amino-acid sequence, 555 residues long: Protein peste (555 aa).

Topologically, residues M1–H7 are cytoplasmic. A helical membrane pass occupies residues C8–F28. Residues R29–D434 are Extracellular-facing. N-linked (GlcNAc...) asparagine glycans are attached at residues N70, N110, N129, N213, N242, N312, and N342. The helical transmembrane segment at I435 to G455 threads the bilayer. Residues G456–R555 lie on the Cytoplasmic side of the membrane.

This sequence belongs to the CD36 family.

It is found in the cell membrane. Functionally, (Microbial infection) Plays a role in mycobacterial infection. Mediates infection by M.fortuitum and uptake of M.smegmatis. In Drosophila melanogaster (Fruit fly), this protein is Protein peste.